We begin with the raw amino-acid sequence, 411 residues long: 6-hydroxytryprostatin B O-methyltransferase (411 aa).

Position 270 (Asp-270) interacts with S-adenosyl-L-methionine. His-313 serves as the catalytic Proton acceptor.

The protein belongs to the class I-like SAM-binding methyltransferase superfamily. Cation-independent O-methyltransferase family. In terms of assembly, homodimer.

It catalyses the reaction 6-hydroxytryprostatin B + S-adenosyl-L-methionine = tryprostatin A + S-adenosyl-L-homocysteine + H(+). It functions in the pathway alkaloid biosynthesis. 6-hydroxytryprostatin B O-methyltransferase; part of the gene cluster that mediates the biosynthesis of fumitremorgins, indole alkaloids that carry not only intriguing chemical structures, but also interesting biological and pharmacological activities. The biosynthesis of fumitremorgin-type alkaloids begins by condensation of the two amino acids L-tryptophan and L-proline to brevianamide F, catalyzed by the non-ribosomal peptide synthetase ftmPS/ftmA. Brevianamide F is then prenylated by the prenyltransferase ftmPT1/ftmB in the presence of dimethylallyl diphosphate, resulting in the formation of tryprostatin B. The three cytochrome P450 monooxygenases, ftmP450-1/ftmC, ftmP450-2/ftmE and ftmP450-3/FtmG, are responsible for the conversion of tryprostatin B to 6-hydroxytryprostatin B, tryprostatin A to fumitremorgin C and fumitremorgin C to 12,13-dihydroxyfumitremorgin C, respectively. The putative methyltransferase ftmMT/ftmD is expected for the conversion of 6-hydroxytryprostatin B to tryprostatin A. FtmPT2/FtmH catalyzes the prenylation of 12,13-dihydroxyfumitre-morgin C in the presence of dimethylallyl diphosphate, resulting in the formation of fumitremorgin B. Fumitremorgin B is further converted to verruculogen by ftmOx1/ftmF via the insertion of an endoperoxide bond between the two prenyl moieties. Finally, verruculogen is further converted to fumitremorgin A by the verruculogen prenyltransferase ftmPT3. This chain is 6-hydroxytryprostatin B O-methyltransferase, found in Neosartorya fischeri (strain ATCC 1020 / DSM 3700 / CBS 544.65 / FGSC A1164 / JCM 1740 / NRRL 181 / WB 181) (Aspergillus fischerianus).